A 182-amino-acid polypeptide reads, in one-letter code: Gas vesicle protein H1 (182 aa).

Over residues 1 to 11 (MVPDENDDASD) the composition is skewed to acidic residues. 2 disordered regions span residues 1–21 (MVPD…SGLL) and 65–106 (GRAD…GGTS). The segment covering 12–21 (DQSSQLSGLL) has biased composition (low complexity). Basic and acidic residues predominate over residues 92–101 (TTEDSIHVET).

It belongs to the gas vesicle GvpH family. As to quaternary structure, gvpF to GvpM interact with each other in vitro, and may form multi-subunit complex(es). Interacts with GvpC1. Might interact with GvpA1.

It localises to the cytoplasm. It is found in the gas vesicle. Its function is as follows. Proteins GvpF to GvpM might be involved in nucleating gas vesicle formation. May be important for the stability of gas vesicles. Gas vesicles are hollow, gas filled proteinaceous nanostructures found in several microbial planktonic microorganisms. They allow positioning of halobacteria at the optimal depth for growth in the poorly aerated, shallow brine pools of their habitat. In terms of biological role, expression of a 9.5 kb p-vac DNA fragment containing 2 divergently transcribed regions (gvpD-gvpE-gvpF-gvpG-gvpH-gvpI-gvpJ-gvpK-gvpL-gvpM and gvpA-gvpC-gvpN-gvpO) allows H.volcanii to produce gas vesicles. A similar region restores gas vesicle production in H.halobium without the p-vac locus, but it still has the c-vac locus. This Halobacterium salinarum (strain ATCC 700922 / JCM 11081 / NRC-1) (Halobacterium halobium) protein is Gas vesicle protein H1 (gvpH11).